A 176-amino-acid chain; its full sequence is N-alpha-acetyltransferase 30 (176 aa).

In terms of domain architecture, N-acetyltransferase spans 3–159 (IVYKPLDIRN…DAFKLILPLT (157 aa)).

This sequence belongs to the acetyltransferase family. MAK3 subfamily. In terms of assembly, component of the N-terminal acetyltransferase C (NatC) complex, which is composed of MAK3, MAK10 and MAK31.

Its subcellular location is the cytoplasm. It is found in the nucleus. The catalysed reaction is N-terminal L-methionyl-L-leucyl-[protein] + acetyl-CoA = N-terminal N(alpha)-acetyl-L-methionyl-L-leucyl-[protein] + CoA + H(+). It carries out the reaction N-terminal L-methionyl-L-isoleucyl-[protein] + acetyl-CoA = N-terminal N(alpha)-acetyl-L-methionyl-L-isoleucyl-[protein] + CoA + H(+). The enzyme catalyses N-terminal L-methionyl-L-phenylalanyl-[protein] + acetyl-CoA = N-terminal N(alpha)-acetyl-L-methionyl-L-phenylalanyl-[protein] + CoA + H(+). It catalyses the reaction N-terminal L-methionyl-L-tryptophyl-[protein] + acetyl-CoA = N-terminal N(alpha)-acetyl-L-methionyl-L-tryptophyl-[protein] + CoA + H(+). The catalysed reaction is N-terminal L-methionyl-L-tyrosyl-[protein] + acetyl-CoA = N-terminal N(alpha)-acetyl-L-methionyl-L-tyrosyl-[protein] + CoA + H(+). In terms of biological role, catalytic component of the NatC N-terminal acetyltransferase, which catalyzes acetylation of the N-terminus Met of L-A virus GAG protein and possibly GRH1. The sequence is that of N-alpha-acetyltransferase 30 (MAK3) from Saccharomyces cerevisiae (strain ATCC 204508 / S288c) (Baker's yeast).